We begin with the raw amino-acid sequence, 514 residues long: Beta-secretase 2 (514 aa).

The signal sequence occupies residues 1-19 (MGALLRALLLLVLAQWLLS). The propeptide occupies 20–62 (AVPALAPAPFTLPLQVAGATNHRASAVPGLGTPELPRADGLAL). Residues 20 to 469 (AVPALAPAPF…NEPILWIVSY (450 aa)) lie on the Extracellular side of the membrane. Positions 88–425 (YYLEMLIGTP…DRAQRRVGFA (338 aa)) constitute a Peptidase A1 domain. The active site involves Asp-106. Residue Asn-166 is glycosylated (N-linked (GlcNAc...) asparagine). Disulfide bonds link Cys-229–Cys-429, Cys-288–Cys-453, and Cys-340–Cys-389. The active site involves Asp-299. A glycan (N-linked (GlcNAc...) asparagine) is linked at Asn-362. The chain crosses the membrane as a helical span at residues 470-490 (ALMSVCGAILLVLILLLLLPL). Topologically, residues 491-514 (HCRHAPRDPEVVNDESSLVRHRWK) are cytoplasmic.

Belongs to the peptidase A1 family. Monomer. Interacts with RTN3 and RTN4. Post-translationally, undergoes autoproteolytic cleavage. Glycosylated. As to expression, high expression in pancreatic islets. Expressed at much lower levels in the pituitary, colon, and ovaries and is nearly absent from all the other tissues.

It localises to the cell membrane. Its subcellular location is the golgi apparatus. The protein resides in the endoplasmic reticulum. It is found in the endosome. The protein localises to the melanosome. The enzyme catalyses Broad endopeptidase specificity. Cleaves Glu-Val-Asn-Leu-|-Asp-Ala-Glu-Phe in the Swedish variant of Alzheimer's amyloid precursor protein.. Responsible for the proteolytic processing of the amyloid precursor protein (APP). Cleaves APP, between residues 690 and 691, leading to the generation and extracellular release of beta-cleaved soluble APP, and a corresponding cell-associated C-terminal fragment which is later released by gamma-secretase. It has also been shown that it can cleave APP between residues 671 and 672. Involved in the proteolytic shedding of PMEL at early stages of melanosome biogenesis. Cleaves PMEL within the M-beta fragment to release the amyloidogenic PMEL luminal fragment containing M-alpha and a small portion of M-beta N-terminus. This is a prerequisite step for subsequent processing and assembly of PMEL fibrils into amyloid sheets. Responsible also for the proteolytic processing of CLTRN in pancreatic beta cells. This is Beta-secretase 2 (Bace2) from Mus musculus (Mouse).